The following is a 217-amino-acid chain: Large ribosomal subunit protein uL1 (217 aa).

It belongs to the universal ribosomal protein uL1 family.

This Eremothecium gossypii (strain ATCC 10895 / CBS 109.51 / FGSC 9923 / NRRL Y-1056) (Yeast) protein is Large ribosomal subunit protein uL1 (RPL10A).